The following is a 900-amino-acid chain: Protein translocase subunit SecA (900 aa).

Residues Gln-87, 105–109, and Asp-512 contribute to the ATP site; that span reads GEGKT. Residues 849–900 form a disordered region; sequence ERLAQQQQFSHQEEDSLNTGSPAQADRKIGRNDPCPCGSGKKYKQCHGRLQK. Zn(2+)-binding residues include Cys-883, Cys-885, Cys-894, and His-895. The span at 889–900 shows a compositional bias: basic residues; it reads KKYKQCHGRLQK.

Belongs to the SecA family. As to quaternary structure, monomer and homodimer. Part of the essential Sec protein translocation apparatus which comprises SecA, SecYEG and auxiliary proteins SecDF-YajC and YidC. Requires Zn(2+) as cofactor.

The protein localises to the cell inner membrane. The protein resides in the cytoplasm. The catalysed reaction is ATP + H2O + cellular proteinSide 1 = ADP + phosphate + cellular proteinSide 2.. Part of the Sec protein translocase complex. Interacts with the SecYEG preprotein conducting channel. Has a central role in coupling the hydrolysis of ATP to the transfer of proteins into and across the cell membrane, serving both as a receptor for the preprotein-SecB complex and as an ATP-driven molecular motor driving the stepwise translocation of polypeptide chains across the membrane. The protein is Protein translocase subunit SecA of Pectobacterium atrosepticum (strain SCRI 1043 / ATCC BAA-672) (Erwinia carotovora subsp. atroseptica).